Here is a 648-residue protein sequence, read N- to C-terminus: Replication restart protein PriA (648 aa).

The region spanning 131 to 297 (TILNESNKPT…EIGKYQLVTL (167 aa)) is the Helicase ATP-binding domain. Position 144-151 (144-151 (GVTGSGKT)) interacts with ATP. The short motif at 240–243 (DEEH) is the DEAH box element. 8 residues coordinate Zn(2+): cysteine 358, cysteine 361, cysteine 367, cysteine 370, cysteine 385, cysteine 388, cysteine 398, and cysteine 401. Residues 393 to 548 (KIFSSCPECL…SFFANELEIR (156 aa)) form the Helicase C-terminal domain.

Belongs to the helicase family. PriA subfamily. As to quaternary structure, component of the replication restart primosome. Requires Zn(2+) as cofactor.

It carries out the reaction Couples ATP hydrolysis with the unwinding of duplex DNA by translocating in the 3'-5' direction.. The catalysed reaction is ATP + H2O = ADP + phosphate + H(+). In terms of biological role, initiates the restart of stalled replication forks, which reloads the replicative helicase on sites other than the origin of replication. Recognizes and binds to abandoned replication forks and remodels them to uncover a helicase loading site. Promotes assembly of the primosome at these replication forks. The protein is Replication restart protein PriA of Rickettsia felis (strain ATCC VR-1525 / URRWXCal2) (Rickettsia azadi).